A 161-amino-acid polypeptide reads, in one-letter code: Large ribosomal subunit protein eL21 (161 aa).

The protein belongs to the eukaryotic ribosomal protein eL21 family.

This chain is Large ribosomal subunit protein eL21 (rpl-21), found in Caenorhabditis elegans.